We begin with the raw amino-acid sequence, 480 residues long: tRNA-2-methylthio-N(6)-dimethylallyladenosine synthase (480 aa).

The MTTase N-terminal domain occupies 31–151; the sequence is RGLHVITWGC…LPEMVARAAR (121 aa). [4Fe-4S] cluster is bound by residues Cys-40, Cys-76, Cys-114, Cys-192, Cys-196, and Cys-199. The 233-residue stretch at 178–410 folds into the Radical SAM core domain; it reads SPGGITSFLT…QALLRTQQDA (233 aa). A TRAM domain is found at 413–475; sequence DGTVGHVVPV…TNSLSGTLVQ (63 aa).

Belongs to the methylthiotransferase family. MiaB subfamily. Monomer. Requires [4Fe-4S] cluster as cofactor.

It is found in the cytoplasm. The enzyme catalyses N(6)-dimethylallyladenosine(37) in tRNA + (sulfur carrier)-SH + AH2 + 2 S-adenosyl-L-methionine = 2-methylsulfanyl-N(6)-dimethylallyladenosine(37) in tRNA + (sulfur carrier)-H + 5'-deoxyadenosine + L-methionine + A + S-adenosyl-L-homocysteine + 2 H(+). Its function is as follows. Catalyzes the methylthiolation of N6-(dimethylallyl)adenosine (i(6)A), leading to the formation of 2-methylthio-N6-(dimethylallyl)adenosine (ms(2)i(6)A) at position 37 in tRNAs that read codons beginning with uridine. The sequence is that of tRNA-2-methylthio-N(6)-dimethylallyladenosine synthase from Gluconacetobacter diazotrophicus (strain ATCC 49037 / DSM 5601 / CCUG 37298 / CIP 103539 / LMG 7603 / PAl5).